Here is a 306-residue protein sequence, read N- to C-terminus: Homoserine O-acetyltransferase (306 aa).

The active-site Acyl-thioester intermediate is the Cys-142. Residues Lys-163 and Ser-192 each contribute to the substrate site. The active-site Proton acceptor is His-235. Glu-237 is a catalytic residue. Residue Arg-249 participates in substrate binding.

Belongs to the MetA family.

It is found in the cytoplasm. The enzyme catalyses L-homoserine + acetyl-CoA = O-acetyl-L-homoserine + CoA. Its pathway is amino-acid biosynthesis; L-methionine biosynthesis via de novo pathway; O-acetyl-L-homoserine from L-homoserine: step 1/1. Its function is as follows. Transfers an acetyl group from acetyl-CoA to L-homoserine, forming acetyl-L-homoserine. This is Homoserine O-acetyltransferase from Brucella abortus (strain S19).